A 604-amino-acid polypeptide reads, in one-letter code: Aspartate--tRNA(Asp/Asn) ligase (604 aa).

Glu168 contributes to the L-aspartate binding site. The segment at 192–195 is aspartate; it reads QLFK. Arg214 lines the L-aspartate pocket. ATP contacts are provided by residues 214–216 and Gln223; that span reads RDE. His446 is an L-aspartate binding site. Position 480 (Glu480) interacts with ATP. Residue Arg487 participates in L-aspartate binding. ATP is bound at residue 532–535; the sequence is GWDR. Residues 575–604 form a disordered region; the sequence is LEAGVDARPKPEARAQAGTAGPAAPVADPT. Over residues 577–587 the composition is skewed to basic and acidic residues; the sequence is AGVDARPKPEA. Positions 588–604 are enriched in low complexity; sequence RAQAGTAGPAAPVADPT.

The protein belongs to the class-II aminoacyl-tRNA synthetase family. Type 1 subfamily. Homodimer.

It localises to the cytoplasm. It carries out the reaction tRNA(Asx) + L-aspartate + ATP = L-aspartyl-tRNA(Asx) + AMP + diphosphate. Functionally, aspartyl-tRNA synthetase with relaxed tRNA specificity since it is able to aspartylate not only its cognate tRNA(Asp) but also tRNA(Asn). Reaction proceeds in two steps: L-aspartate is first activated by ATP to form Asp-AMP and then transferred to the acceptor end of tRNA(Asp/Asn). The protein is Aspartate--tRNA(Asp/Asn) ligase of Salinispora arenicola (strain CNS-205).